The chain runs to 445 residues: Rab GDP dissociation inhibitor beta (445 aa).

Met-1 carries the post-translational modification N-acetylmethionine. Lys-57 is subject to N6-succinyllysine. Lys-112 carries the N6-acetyllysine modification. A Phosphoserine modification is found at Ser-130. Position 269 is an N6-acetyllysine (Lys-269). At Ser-382 the chain carries Phosphoserine.

It belongs to the Rab GDI family. In terms of assembly, interacts with RHOH. Interacts with the GDP-bound inactive forms of RAB3A, RAB3B, RAB3C, RAB5A, RAB5B, RAB5C, RAB8A, RAB8B, RAB10, RAB12, RAB35, and RAB43; binds RAB3D to a lesser extent. Interacts with DZIP1; this interaction negatively regulates the interaction of GDI2 with GDP-bound RAB8A.

Its subcellular location is the cytoplasm. The protein localises to the membrane. It is found in the golgi apparatus. The protein resides in the trans-Golgi network. In terms of biological role, GDP-dissociation inhibitor preventing the GDP to GTP exchange of most Rab proteins. By keeping these small GTPases in their inactive GDP-bound form regulates intracellular membrane trafficking. Negatively regulates protein transport to the cilium and ciliogenesis through the inhibition of RAB8A. The protein is Rab GDP dissociation inhibitor beta (GDI2) of Pongo abelii (Sumatran orangutan).